The chain runs to 266 residues: UPF0294 protein YafD (266 aa).

Belongs to the UPF0294 family.

The protein resides in the cytoplasm. The sequence is that of UPF0294 protein YafD from Salmonella typhi.